A 51-amino-acid chain; its full sequence is Sperm protamine P1 (51 aa).

2 cysteine pairs are disulfide-bonded: Cys7-Cys15 and Cys40-Cys48.

Belongs to the protamine P1 family. In terms of assembly, cross-linked by interchain disulfide bonds around the DNA-helix. Testis.

The protein resides in the nucleus. The protein localises to the chromosome. In terms of biological role, protamines substitute for histones in the chromatin of sperm during the haploid phase of spermatogenesis. They compact sperm DNA into a highly condensed, stable and inactive complex. This Capra hircus (Goat) protein is Sperm protamine P1 (PRM1).